Consider the following 298-residue polypeptide: Syntaxin-4 (298 aa).

Over 1-274 the chain is Cytoplasmic; the sequence is MRDRTHELRQ…NQKKARKKKV (274 aa). Ser15, Ser29, Ser35, Ser36, Ser117, Ser208, and Ser248 each carry phosphoserine. A coiled-coil region spans residues 38-163; sequence DDEFFQKVQT…ERIRRQLKIT (126 aa). The interval 154–298 is interaction with CENPF; that stretch reads ERIRRQLKIT…VIIGITITVG (145 aa). Residues 200-262 form the t-SNARE coiled-coil homology domain; it reads LNEISARHSE…ERGQEHVKIA (63 aa). The chain crosses the membrane as a helical; Anchor for type IV membrane protein span at residues 275 to 295; sequence MIAICVSVTVLILAVIIGITI. Over 296–298 the chain is Extracellular; that stretch reads TVG.

This sequence belongs to the syntaxin family. Found in a complex with VAMP8 and SNAP23. Detected in a complex with SNAP23 and STXBP4. Interacts with SNAP23 and SNAPIN. Interacts with VAMP2. Interacts with LLGL1. Interacts (via C-terminus) with CENPF. Interacts with DOC2B. Interacts with STXBP3; excludes interaction with DOC2B and SNAP25. Interacts with STXBP4; excludes interaction with VAMP2. Component of the SNARE complex composed of STX4, SNAP23 and VAMP7 that interacts with SYT7 during lysosomal exocytosis. Interacts with STXBP6. Interacts with STXBP5L. Expressed in all tissues tested including adipose, brain, testis, intestine, liver, heart, spleen, skeletal muscle and kidney.

Its subcellular location is the cell membrane. It is found in the cell projection. The protein resides in the neuron projection. It localises to the stereocilium. In terms of biological role, plasma membrane t-SNARE that mediates docking of transport vesicles. Necessary for the translocation of SLC2A4 from intracellular vesicles to the plasma membrane. In neurons, recruited at neurite tips to membrane domains rich in the phospholipid 1-oleoyl-2-palmitoyl-PC (OPPC) which promotes neurite tip surface expression of the dopamine transporter SLC6A3/DAT by facilitating fusion of SLC6A3-containing transport vesicles with the plasma membrane. Together with STXB3 and VAMP2, may also play a role in docking/fusion of intracellular GLUT4-containing vesicles with the cell surface in adipocytes and in docking of synaptic vesicles at presynaptic active zones. Required for normal hearing. The sequence is that of Syntaxin-4 (Stx4) from Rattus norvegicus (Rat).